We begin with the raw amino-acid sequence, 208 residues long: Thymidylate kinase (208 aa).

10–17 provides a ligand contact to ATP; it reads GPDGSGKT.

This sequence belongs to the thymidylate kinase family.

The catalysed reaction is dTMP + ATP = dTDP + ADP. Phosphorylation of dTMP to form dTDP in both de novo and salvage pathways of dTTP synthesis. In Listeria monocytogenes serotype 4a (strain HCC23), this protein is Thymidylate kinase.